The following is a 167-amino-acid chain: MALEGEDVRDYNLTEEQKAIKAKYPPVSRKYEYLDHTADVQLHAWGDTLEEAFEQCAMAMFGYMTDTGTVEPLQTIEVETQGDDLQSLLFHFLDEWLYKFSADEFFIPREVKVLNIDQRNFKIRSIGWGEEFSLSKHPQGTEVKAITYSAMQVYNEEKPEVFVIIDI.

At Ala2 the chain carries N-acetylalanine. Residues Asp39, Asp166, and Ile167 each coordinate Ca(2+).

It belongs to the archease family. Component of the tRNA-splicing ligase complex.

Its function is as follows. Component of the tRNA-splicing ligase complex required to facilitate the enzymatic turnover of catalytic subunit RTCB. Together with DDX1, acts by facilitating the guanylylation of RTCB, a key intermediate step in tRNA ligation. The sequence is that of Protein archease (ZBTB8OS) from Bos taurus (Bovine).